We begin with the raw amino-acid sequence, 212 residues long: Dephospho-CoA kinase (212 aa).

The 206-residue stretch at 6–211 folds into the DPCK domain; it reads RLGLTGGIGS…LSCQPLSPNQ (206 aa). 14–19 lines the ATP pocket; the sequence is GSGKST.

This sequence belongs to the CoaE family.

The protein localises to the cytoplasm. It carries out the reaction 3'-dephospho-CoA + ATP = ADP + CoA + H(+). The protein operates within cofactor biosynthesis; coenzyme A biosynthesis; CoA from (R)-pantothenate: step 5/5. Catalyzes the phosphorylation of the 3'-hydroxyl group of dephosphocoenzyme A to form coenzyme A. The chain is Dephospho-CoA kinase from Albidiferax ferrireducens (strain ATCC BAA-621 / DSM 15236 / T118) (Rhodoferax ferrireducens).